The chain runs to 395 residues: Phosphatidylinositol 4-phosphate 5-kinase-like protein 1 (395 aa).

A disordered region spans residues 1–25 (MATPSLRSHEIPAHSQEAGNKSISS). The PIPK domain maps to 37 to 394 (ARQSRVGLFE…RLCRWAEVHT (358 aa)).

Interacts with type I phosphatidylinositol 4-phosphate 5-kinases, including PIP5K1A and PIP5K1B. In terms of tissue distribution, highly expressed in brain and testis, relatively to heart, spleen, lung, liver, skeletal muscle and kidney.

It is found in the cytoplasm. The protein resides in the membrane. Functionally, may act as a scaffold to localize and regulate type I phosphatidylinositol 4-phosphate 5-kinases to specific compartments within the cell, where they generate PI(4,5)P2 for actin nucleation, signaling and scaffold protein recruitment and conversion to PI(3,4,5)P3. This is Phosphatidylinositol 4-phosphate 5-kinase-like protein 1 (Pip5kl1) from Mus musculus (Mouse).